Consider the following 276-residue polypeptide: 2-dehydro-3-deoxyphosphooctonate aldolase (276 aa).

The protein belongs to the KdsA family.

Its subcellular location is the cytoplasm. It carries out the reaction D-arabinose 5-phosphate + phosphoenolpyruvate + H2O = 3-deoxy-alpha-D-manno-2-octulosonate-8-phosphate + phosphate. It participates in carbohydrate biosynthesis; 3-deoxy-D-manno-octulosonate biosynthesis; 3-deoxy-D-manno-octulosonate from D-ribulose 5-phosphate: step 2/3. It functions in the pathway bacterial outer membrane biogenesis; lipopolysaccharide biosynthesis. This Xylella fastidiosa (strain 9a5c) protein is 2-dehydro-3-deoxyphosphooctonate aldolase.